A 91-amino-acid polypeptide reads, in one-letter code: Acylphosphatase (91 aa).

The region spanning 3–91 (TVTMKVTGLV…EKFTRFSVVY (89 aa)) is the Acylphosphatase-like domain. Catalysis depends on residues R18 and N36.

This sequence belongs to the acylphosphatase family.

It catalyses the reaction an acyl phosphate + H2O = a carboxylate + phosphate + H(+). The chain is Acylphosphatase (acyP) from Lactobacillus gasseri (strain ATCC 33323 / DSM 20243 / BCRC 14619 / CIP 102991 / JCM 1131 / KCTC 3163 / NCIMB 11718 / NCTC 13722 / AM63).